The sequence spans 122 residues: Ribosome-binding factor A (122 aa).

Belongs to the RbfA family. In terms of assembly, monomer. Binds 30S ribosomal subunits, but not 50S ribosomal subunits or 70S ribosomes.

The protein resides in the cytoplasm. One of several proteins that assist in the late maturation steps of the functional core of the 30S ribosomal subunit. Associates with free 30S ribosomal subunits (but not with 30S subunits that are part of 70S ribosomes or polysomes). Required for efficient processing of 16S rRNA. May interact with the 5'-terminal helix region of 16S rRNA. The chain is Ribosome-binding factor A from Opitutus terrae (strain DSM 11246 / JCM 15787 / PB90-1).